Here is a 50-residue protein sequence, read N- to C-terminus: U2-ctenitoxin-Pk1a (50 aa).

5 disulfides stabilise this stretch: cysteine 1-cysteine 15, cysteine 8-cysteine 21, cysteine 12-cysteine 47, cysteine 14-cysteine 31, and cysteine 23-cysteine 29.

As to expression, expressed by the venom gland.

The protein localises to the secreted. Insecticidal neurotoxin that reversibly inhibits the N-methyl-D-aspartate (NMDA)-subtype of ionotropic glutamate receptor (GRIN) and inhibits inactivation of insect sodium channels (Nav). In vivo, is highly toxic to insects. The polypeptide is U2-ctenitoxin-Pk1a (Phoneutria keyserlingi (Brazilian wandering spider)).